A 511-amino-acid chain; its full sequence is Rab proteins geranylgeranyltransferase component A (511 aa).

Belongs to the Rab GDI family.

It is found in the cytoplasm. The protein localises to the perinuclear region. The protein resides in the cytoskeleton. It localises to the spindle pole. Its function is as follows. Binds unprenylated Rab proteins, presents it to the catalytic component B, and remains bound to it after the geranylgeranyl transfer reaction. The component A is thought to be regenerated by transferring its prenylated Rab to a protein acceptor. The protein is Rab proteins geranylgeranyltransferase component A of Drosophila melanogaster (Fruit fly).